The primary structure comprises 121 residues: Two-component response regulator ORR12 (121 aa).

The region spanning 5–121 (HVLVVDDTLV…VDLPRILNYI (117 aa)) is the Response regulatory domain. D55 carries the post-translational modification 4-aspartylphosphate.

Belongs to the ARR family. Type-A subfamily. Post-translationally, two-component system major event consists of a His-to-Asp phosphorelay between a sensor histidine kinase (HK) and a response regulator (RR). In plants, the His-to-Asp phosphorelay involves an additional intermediate named Histidine-containing phosphotransfer protein (HPt). This multistep phosphorelay consists of a His-Asp-His-Asp sequential transfer of a phosphate group between first a His and an Asp of the HK protein, followed by the transfer to a conserved His of the HPt protein and finally the transfer to an Asp in the receiver domain of the RR protein. In terms of tissue distribution, expressed in flowers and panicles.

Functionally, functions as a response regulator involved in His-to-Asp phosphorelay signal transduction system. Phosphorylation of the Asp residue in the receiver domain activates the ability of the protein to promote the transcription of target genes. Type-A response regulators seem to act as negative regulators of the cytokinin signaling. The polypeptide is Two-component response regulator ORR12 (Oryza sativa subsp. japonica (Rice)).